The following is a 766-amino-acid chain: Serine/threonine-protein kinase tousled-like 1 (766 aa).

Positions 1 to 198 (MSVQSSSGSL…PSPTALAFGD (198 aa)) are disordered. Residues 20-33 (STSPTPGSAAAARS) are compositionally biased toward low complexity. T38 is subject to Phosphothreonine. Basic and acidic residues predominate over residues 43–64 (RPREGAMDELHSLDPRRQELLE). Phosphoserine is present on residues S54, S77, and S80. Over residues 68–85 (TGVATGSTGSTGSCSVGA) the composition is skewed to low complexity. Residues 87–103 (ASTNNESSNHSFGSLGS) are compositionally biased toward polar residues. Positions 105 to 121 (SDKESETPEKKQSESSR) are enriched in basic and acidic residues. 4 positions are modified to phosphoserine: S134, S159, S174, and S176. Over residues 170 to 192 (SPQNSHSHSTPSSSVRPNSPSPT) the composition is skewed to low complexity. The stretch at 229-280 (NQDLEKKEGRIDDLLRANCDLRRQIDDQQKLLEKYKERLNKCISMSKKLLIE) forms a coiled coil. A disordered region spans residues 344 to 381 (KLLGKRKPPTANNSQAPATNSEAKQRKTKAVNGAENDP). Polar residues predominate over residues 353 to 365 (TANNSQAPATNSE). The stretch at 397–445 (HEQEEIFKLRLGHLKKEEAEIQAELERLERVRNLHIRELKRINNEDNSQ) forms a coiled coil. Residues 456–734 (YLLLHLLGRG…VHQLANDPYL (279 aa)) form the Protein kinase domain. ATP contacts are provided by residues 462 to 470 (LGRGGFSEV) and K485. Residue D586 is the Proton acceptor of the active site. Phosphoserine is present on S743. Positions 745–766 (GNLHMSGLTATPTPPSSSIITY) are disordered.

It belongs to the protein kinase superfamily. Ser/Thr protein kinase family. Heterodimer with TLK2. Mg(2+) is required as a cofactor. Ubiquitously expressed in all tissues examined.

It localises to the nucleus. The catalysed reaction is L-seryl-[protein] + ATP = O-phospho-L-seryl-[protein] + ADP + H(+). It carries out the reaction L-threonyl-[protein] + ATP = O-phospho-L-threonyl-[protein] + ADP + H(+). With respect to regulation, cell-cycle regulated, maximal activity in S-phase. Inactivated by phosphorylation at Ser-743, potentially by CHEK1. Functionally, rapidly and transiently inhibited by phosphorylation following the generation of DNA double-stranded breaks during S-phase. This is cell cycle checkpoint and ATM-pathway dependent and appears to regulate processes involved in chromatin assembly. Isoform 3 protects the cells from the ionizing radiation by facilitating the repair of DSBs. In vitro, phosphorylates histone H3 at 'Ser-10'. The polypeptide is Serine/threonine-protein kinase tousled-like 1 (Tlk1) (Mus musculus (Mouse)).